Here is a 241-residue protein sequence, read N- to C-terminus: Triosephosphate isomerase (241 aa).

A substrate-binding site is contributed by 9 to 11 (NWK). The Electrophile role is filled by histidine 96. Residue glutamate 165 is the Proton acceptor of the active site. Substrate contacts are provided by residues glycine 171, serine 204, and 225 to 226 (GG).

The protein belongs to the triosephosphate isomerase family. Homodimer.

The protein localises to the cytoplasm. The enzyme catalyses D-glyceraldehyde 3-phosphate = dihydroxyacetone phosphate. It functions in the pathway carbohydrate biosynthesis; gluconeogenesis. The protein operates within carbohydrate degradation; glycolysis; D-glyceraldehyde 3-phosphate from glycerone phosphate: step 1/1. Functionally, involved in the gluconeogenesis. Catalyzes stereospecifically the conversion of dihydroxyacetone phosphate (DHAP) to D-glyceraldehyde-3-phosphate (G3P). This is Triosephosphate isomerase from Prochlorococcus marinus (strain MIT 9301).